Here is a 317-residue protein sequence, read N- to C-terminus: Beta-ketoacyl-[acyl-carrier-protein] synthase III (317 aa).

Residues Cys-112 and His-244 contribute to the active site. Positions 245–249 (QANVR) are ACP-binding. Asn-274 is an active-site residue.

The protein belongs to the thiolase-like superfamily. FabH family. As to quaternary structure, homodimer.

Its subcellular location is the cytoplasm. The catalysed reaction is malonyl-[ACP] + acetyl-CoA + H(+) = 3-oxobutanoyl-[ACP] + CO2 + CoA. It participates in lipid metabolism; fatty acid biosynthesis. Catalyzes the condensation reaction of fatty acid synthesis by the addition to an acyl acceptor of two carbons from malonyl-ACP. Catalyzes the first condensation reaction which initiates fatty acid synthesis and may therefore play a role in governing the total rate of fatty acid production. Possesses both acetoacetyl-ACP synthase and acetyl transacylase activities. Its substrate specificity determines the biosynthesis of branched-chain and/or straight-chain of fatty acids. This Rickettsia canadensis (strain McKiel) protein is Beta-ketoacyl-[acyl-carrier-protein] synthase III.